The following is a 216-amino-acid chain: Ribose-5-phosphate isomerase A (216 aa).

Residues 26–29 (TGST), 79–82 (DGAD), and 92–95 (KGGG) contribute to the substrate site. Catalysis depends on glutamate 101, which acts as the Proton acceptor. A substrate-binding site is contributed by lysine 119.

It belongs to the ribose 5-phosphate isomerase family. As to quaternary structure, homodimer.

The catalysed reaction is aldehydo-D-ribose 5-phosphate = D-ribulose 5-phosphate. Its pathway is carbohydrate degradation; pentose phosphate pathway; D-ribose 5-phosphate from D-ribulose 5-phosphate (non-oxidative stage): step 1/1. In terms of biological role, catalyzes the reversible conversion of ribose-5-phosphate to ribulose 5-phosphate. The protein is Ribose-5-phosphate isomerase A of Legionella pneumophila (strain Paris).